Here is a 312-residue protein sequence, read N- to C-terminus: Glyoxylate/hydroxypyruvate reductase A (312 aa).

R227 is a catalytic residue. H275 serves as the catalytic Proton donor.

This sequence belongs to the D-isomer specific 2-hydroxyacid dehydrogenase family. GhrA subfamily.

The protein localises to the cytoplasm. It carries out the reaction glycolate + NADP(+) = glyoxylate + NADPH + H(+). It catalyses the reaction (R)-glycerate + NAD(+) = 3-hydroxypyruvate + NADH + H(+). The catalysed reaction is (R)-glycerate + NADP(+) = 3-hydroxypyruvate + NADPH + H(+). Catalyzes the NADPH-dependent reduction of glyoxylate and hydroxypyruvate into glycolate and glycerate, respectively. The sequence is that of Glyoxylate/hydroxypyruvate reductase A from Salmonella agona (strain SL483).